Reading from the N-terminus, the 211-residue chain is Dual specificity protein phosphatase 26 (211 aa).

In terms of domain architecture, Tyrosine-protein phosphatase spans Asn-60 to Gln-207. The active-site Phosphocysteine intermediate is the Cys-152.

Belongs to the protein-tyrosine phosphatase family. Non-receptor class dual specificity subfamily. In terms of assembly, interacts with HSF4.

It is found in the cytoplasm. Its subcellular location is the nucleus. The protein localises to the golgi apparatus. The catalysed reaction is O-phospho-L-tyrosyl-[protein] + H2O = L-tyrosyl-[protein] + phosphate. It carries out the reaction O-phospho-L-seryl-[protein] + H2O = L-seryl-[protein] + phosphate. It catalyses the reaction O-phospho-L-threonyl-[protein] + H2O = L-threonyl-[protein] + phosphate. Functionally, inactivates MAPK1 and MAPK3 which leads to dephosphorylation of heat shock factor protein 4 and a reduction in its DNA-binding activity. In Bos taurus (Bovine), this protein is Dual specificity protein phosphatase 26 (DUSP26).